A 941-amino-acid polypeptide reads, in one-letter code: Coiled-coil domain-containing protein 39 (941 aa).

Coiled coils occupy residues 16-122 (AIPV…ENGI), 164-273 (AQQD…ESEI), 306-605 (QLKG…EIKV), and 665-825 (IKAA…EEQD). The tract at residues 868-941 (PTASTKGSRQ…SNVKSKKSSK (74 aa)) is disordered. 2 stretches are compositionally biased toward low complexity: residues 871-903 (STKGSRQSSRSPSHTSLSARSSRSTSTSTSQSS) and 914-934 (SSSLVGSPSRPSSASSSSSNV). 2 positions are modified to phosphoserine: serine 892 and serine 900.

This sequence belongs to the CCDC39 family. In terms of tissue distribution, mainly expressed in nasal brushings and, to a lesser extent, in lungs and testis.

The protein resides in the cytoplasm. Its subcellular location is the cytoskeleton. It localises to the cilium axoneme. Functionally, required for assembly of dynein regulatory complex (DRC) and inner dynein arm (IDA) complexes, which are responsible for ciliary beat regulation, thereby playing a central role in motility in cilia and flagella. Probably acts together with CCDC40 to form a molecular ruler that determines the 96 nanometer (nm) repeat length and arrangements of components in cilia and flagella. Not required for outer dynein arm complexes assembly. The sequence is that of Coiled-coil domain-containing protein 39 from Homo sapiens (Human).